Reading from the N-terminus, the 442-residue chain is tRNA-2-methylthio-N(6)-dimethylallyladenosine synthase (442 aa).

Residues 3 to 120 (NKLYIRTFGC…LPNMLNDALN (118 aa)) enclose the MTTase N-terminal domain. Residues C12, C49, C83, C157, C161, and C164 each coordinate [4Fe-4S] cluster. The region spanning 143-375 (RTNSVTAFVS…QKTINNNTEH (233 aa)) is the Radical SAM core domain. Residues 378 to 440 (QLMIGSIQKV…GNSLMGDLLT (63 aa)) enclose the TRAM domain.

Belongs to the methylthiotransferase family. MiaB subfamily. In terms of assembly, monomer. [4Fe-4S] cluster serves as cofactor.

The protein localises to the cytoplasm. The enzyme catalyses N(6)-dimethylallyladenosine(37) in tRNA + (sulfur carrier)-SH + AH2 + 2 S-adenosyl-L-methionine = 2-methylsulfanyl-N(6)-dimethylallyladenosine(37) in tRNA + (sulfur carrier)-H + 5'-deoxyadenosine + L-methionine + A + S-adenosyl-L-homocysteine + 2 H(+). In terms of biological role, catalyzes the methylthiolation of N6-(dimethylallyl)adenosine (i(6)A), leading to the formation of 2-methylthio-N6-(dimethylallyl)adenosine (ms(2)i(6)A) at position 37 in tRNAs that read codons beginning with uridine. The polypeptide is tRNA-2-methylthio-N(6)-dimethylallyladenosine synthase (Vesicomyosocius okutanii subsp. Calyptogena okutanii (strain HA)).